The sequence spans 421 residues: UDP-N-acetylglucosamine 1-carboxyvinyltransferase (421 aa).

23–24 (KN) is a phosphoenolpyruvate binding site. UDP-N-acetyl-alpha-D-glucosamine is bound at residue arginine 92. The active-site Proton donor is cysteine 116. Cysteine 116 is subject to 2-(S-cysteinyl)pyruvic acid O-phosphothioketal. UDP-N-acetyl-alpha-D-glucosamine is bound by residues 121–125 (RPVDL), 161–164 (KVSV), aspartate 306, and isoleucine 328.

Belongs to the EPSP synthase family. MurA subfamily.

The protein localises to the cytoplasm. The enzyme catalyses phosphoenolpyruvate + UDP-N-acetyl-alpha-D-glucosamine = UDP-N-acetyl-3-O-(1-carboxyvinyl)-alpha-D-glucosamine + phosphate. The protein operates within cell wall biogenesis; peptidoglycan biosynthesis. Cell wall formation. Adds enolpyruvyl to UDP-N-acetylglucosamine. The protein is UDP-N-acetylglucosamine 1-carboxyvinyltransferase of Vibrio campbellii (strain ATCC BAA-1116).